Consider the following 220-residue polypeptide: Adenylate kinase (220 aa).

Residue 10-15 participates in ATP binding; that stretch reads GAGKGT. Residues 30–59 are NMP; the sequence is STGDLFRANISQQTELGKLAKSYMDEGNLV. Residues Thr-31, Arg-36, 57–59, 85–88, and Gln-92 contribute to the AMP site; these read NLV and GFPR. The LID stretch occupies residues 126–164; sequence GRRICRNDSAHVFHVSYKPPKQEGVCDVCGGELYQRDDD. Residues Arg-127 and 137–138 each bind ATP; that span reads VF. 2 residues coordinate AMP: Arg-161 and Arg-172. Gly-200 contributes to the ATP binding site.

It belongs to the adenylate kinase family. As to quaternary structure, monomer.

It is found in the cytoplasm. The enzyme catalyses AMP + ATP = 2 ADP. Its pathway is purine metabolism; AMP biosynthesis via salvage pathway; AMP from ADP: step 1/1. Its function is as follows. Catalyzes the reversible transfer of the terminal phosphate group between ATP and AMP. Plays an important role in cellular energy homeostasis and in adenine nucleotide metabolism. The polypeptide is Adenylate kinase (Streptomyces avermitilis (strain ATCC 31267 / DSM 46492 / JCM 5070 / NBRC 14893 / NCIMB 12804 / NRRL 8165 / MA-4680)).